A 765-amino-acid polypeptide reads, in one-letter code: FHF complex subunit HOOK interacting protein 2A (765 aa).

2 stretches are compositionally biased toward polar residues: residues 200 to 209 and 538 to 550; these read LSTDTGQSCQ and NTLS…SSSP. Disordered stretches follow at residues 200–234 and 538–562; these read LSTD…QMGD and NTLS…TDGK.

This sequence belongs to the FHIP family.

May be required for proper functioning of the nervous system. In Bos taurus (Bovine), this protein is FHF complex subunit HOOK interacting protein 2A (FHIP2A).